The chain runs to 122 residues: Large ribosomal subunit protein uL14 (122 aa).

Belongs to the universal ribosomal protein uL14 family. Part of the 50S ribosomal subunit. Forms a cluster with proteins L3 and L19. In the 70S ribosome, L14 and L19 interact and together make contacts with the 16S rRNA in bridges B5 and B8.

Binds to 23S rRNA. Forms part of two intersubunit bridges in the 70S ribosome. The chain is Large ribosomal subunit protein uL14 from Idiomarina loihiensis (strain ATCC BAA-735 / DSM 15497 / L2-TR).